The primary structure comprises 282 residues: Glutamate--LysW ligase ArgX (282 aa).

ATP contacts are provided by residues Lys-87, Lys-127, 131 to 137 (GSWGRLV), and 167 to 178 (QEYIQYKGRDIR). The region spanning 91-277 (YSKLYREGIP…VAQKLVEYIK (187 aa)) is the ATP-grasp domain. Arg-192 provides a ligand contact to substrate. An ATP-binding site is contributed by Asn-202. A substrate-binding site is contributed by 203-204 (VA). Mg(2+) is bound by residues Asp-237, Glu-250, and Asn-252. 256 to 260 (EFKGF) contributes to the substrate binding site. The short motif at 259–260 (GF) is the GF motif that is essential for ArgX substrate specificity element.

It belongs to the RimK family. LysX subfamily. In terms of assembly, homotetramer. Interacts with LysW. Mg(2+) is required as a cofactor.

The catalysed reaction is [amino-group carrier protein]-C-terminal-L-glutamate + L-glutamate + ATP = [amino-group carrier protein]-C-terminal-gamma-(L-glutamyl)-L-glutamate + ADP + phosphate + H(+). It functions in the pathway amino-acid biosynthesis; L-arginine biosynthesis. Functionally, catalyzes the ATP-dependent formation of a covalent bond between the amino group of glutamate and the gamma-carboxyl group of the C-terminal glutamate residue in LysW. The polypeptide is Glutamate--LysW ligase ArgX (Sulfurisphaera tokodaii (strain DSM 16993 / JCM 10545 / NBRC 100140 / 7) (Sulfolobus tokodaii)).